The following is a 124-amino-acid chain: Basic leucine zipper transcriptional factor ATF-like (124 aa).

A compositionally biased stretch (polar residues) spans 1-23; the sequence is MAQGSDNNDTSYTKSPSPGNKQG. The interval 1-60 is disordered; the sequence is MAQGSDNNDTSYTKSPSPGNKQGSSDDMRKVMRREKNRIAAQKSRMRQTQKADSLHLESE. The bZIP domain maps to 27 to 90; the sequence is DMRKVMRREK…KYLSTVLSNH (64 aa). The tract at residues 29-51 is basic motif; the sequence is RKVMRREKNRIAAQKSRMRQTQK. The leucine-zipper stretch occupies residues 55–83; that stretch reads LHLESESLEKENAALRKEVKRLTEEAKYL.

Belongs to the bZIP family.

The protein localises to the nucleus. Its subcellular location is the cytoplasm. AP-1 family transcription factor that controls the differentiation of lineage-specific cells in the immune system: specifically mediates the differentiation of T-helper 17 cells (Th17), follicular T-helper cells (TfH), CD8(+) dendritic cells and class-switch recombination (CSR) in B-cells. This Danio rerio (Zebrafish) protein is Basic leucine zipper transcriptional factor ATF-like (batf).